The sequence spans 549 residues: Siroheme synthase (549 aa).

The tract at residues 1-203 (MNTFPLFFKL…GNENEALAQL (203 aa)) is precorrin-2 dehydrogenase /sirohydrochlorin ferrochelatase. NAD(+)-binding positions include 22–23 (DV) and 43–44 (PS). Phosphoserine is present on serine 128. Residues 247–549 (GEVYIVGAGP…DGDLEQLIIG (303 aa)) form a uroporphyrinogen-III C-methyltransferase region. Residue proline 256 coordinates S-adenosyl-L-methionine. Aspartate 279 functions as the Proton acceptor in the catalytic mechanism. Lysine 301 functions as the Proton donor in the catalytic mechanism. Residues 332 to 334 (GGD), isoleucine 337, 362 to 363 (TA), methionine 414, and alanine 443 contribute to the S-adenosyl-L-methionine site.

The protein in the N-terminal section; belongs to the precorrin-2 dehydrogenase / sirohydrochlorin ferrochelatase family. In the C-terminal section; belongs to the precorrin methyltransferase family.

It catalyses the reaction uroporphyrinogen III + 2 S-adenosyl-L-methionine = precorrin-2 + 2 S-adenosyl-L-homocysteine + H(+). The catalysed reaction is precorrin-2 + NAD(+) = sirohydrochlorin + NADH + 2 H(+). It carries out the reaction siroheme + 2 H(+) = sirohydrochlorin + Fe(2+). Its pathway is cofactor biosynthesis; adenosylcobalamin biosynthesis; precorrin-2 from uroporphyrinogen III: step 1/1. The protein operates within cofactor biosynthesis; adenosylcobalamin biosynthesis; sirohydrochlorin from precorrin-2: step 1/1. It participates in porphyrin-containing compound metabolism; siroheme biosynthesis; precorrin-2 from uroporphyrinogen III: step 1/1. It functions in the pathway porphyrin-containing compound metabolism; siroheme biosynthesis; siroheme from sirohydrochlorin: step 1/1. Its pathway is porphyrin-containing compound metabolism; siroheme biosynthesis; sirohydrochlorin from precorrin-2: step 1/1. Functionally, multifunctional enzyme that catalyzes the SAM-dependent methylations of uroporphyrinogen III at position C-2 and C-7 to form precorrin-2 via precorrin-1. Then it catalyzes the NAD-dependent ring dehydrogenation of precorrin-2 to yield sirohydrochlorin. Finally, it catalyzes the ferrochelation of sirohydrochlorin to yield siroheme. The protein is Siroheme synthase of Psychrobacter arcticus (strain DSM 17307 / VKM B-2377 / 273-4).